We begin with the raw amino-acid sequence, 630 residues long: Angiotensin-converting enzyme-related protein (630 aa).

The N-terminal stretch at 1–22 is a signal peptide; it reads MGACNITVLLLVIMLWLPHGLS. Residues 28–615 form the Peptidase M2 domain; that stretch reads SASVLEARRF…SRLGVPLGWG (588 aa). 2 disulfides stabilise this stretch: Cys142-Cys150 and Cys344-Cys362. His375 contributes to the Zn(2+) binding site. The active-site Proton acceptor is the Glu376. Zn(2+) is bound by residues His379 and Glu403. Catalysis depends on His505, which acts as the Proton donor. Residues Cys530 and Cys548 are joined by a disulfide bond.

The protein belongs to the peptidase M2 family. It depends on Zn(2+) as a cofactor. In terms of processing, glycosylated.

The protein resides in the secreted. The protein localises to the extracellular space. The enzyme catalyses Release of a C-terminal dipeptide, oligopeptide-|-Xaa-Yaa, when Xaa is not Pro, and Yaa is neither Asp nor Glu. Thus, conversion of angiotensin I to angiotensin II, with increase in vasoconstrictor activity, but no action on angiotensin II.. Its activity is regulated as follows. Inhibited by captopril, lisinopril, trandolaprilat, fosinoprilat and enalaprilat. Functionally, may be involved in the specific maturation or degradation of a number of bioactive peptides. May have a role in the specification of heart progenitors. The sequence is that of Angiotensin-converting enzyme-related protein (Acer) from Drosophila melanogaster (Fruit fly).